Reading from the N-terminus, the 555-residue chain is Glutamine--tRNA ligase (555 aa).

Residues 34 to 44 carry the 'HIGH' region motif; that stretch reads PEPNGYLHIGH. Residues 35–37 and 41–47 contribute to the ATP site; these read EPN and HIGHAKS. Residues D67 and Y212 each coordinate L-glutamine. ATP-binding positions include T231, 261 to 262, and 269 to 271; these read RL and MSK. Residues 268–272 carry the 'KMSKS' region motif; sequence VMSKR. Positions 317-324 are interaction with tRNA; it reads TKQDNTIE.

Belongs to the class-I aminoacyl-tRNA synthetase family. In terms of assembly, monomer.

It is found in the cytoplasm. It carries out the reaction tRNA(Gln) + L-glutamine + ATP = L-glutaminyl-tRNA(Gln) + AMP + diphosphate. The protein is Glutamine--tRNA ligase of Salmonella agona (strain SL483).